The following is a 194-amino-acid chain: 7-methyl-GTP pyrophosphatase (194 aa).

D70 (proton acceptor) is an active-site residue.

Belongs to the Maf family. YceF subfamily. The cofactor is a divalent metal cation.

It localises to the cytoplasm. The enzyme catalyses N(7)-methyl-GTP + H2O = N(7)-methyl-GMP + diphosphate + H(+). Its function is as follows. Nucleoside triphosphate pyrophosphatase that hydrolyzes 7-methyl-GTP (m(7)GTP). May have a dual role in cell division arrest and in preventing the incorporation of modified nucleotides into cellular nucleic acids. The sequence is that of 7-methyl-GTP pyrophosphatase from Vibrio vulnificus (strain CMCP6).